The chain runs to 164 residues: Small ribosomal subunit protein uS3m (164 aa).

The transit peptide at Met-1–Leu-23 directs the protein to the mitochondrion.

This sequence belongs to the universal ribosomal protein uS3 family. Component of the mitochondrial ribosome small subunit (28S) which comprises a 12S rRNA and about 30 distinct proteins.

The protein resides in the mitochondrion. This is Small ribosomal subunit protein uS3m (mrps-24) from Caenorhabditis elegans.